Consider the following 334-residue polypeptide: Aspartate carbamoyltransferase catalytic subunit (334 aa).

Carbamoyl phosphate is bound by residues Arg-70 and Thr-71. Lys-98 contacts L-aspartate. Residues Arg-120, His-150, and Gln-153 each coordinate carbamoyl phosphate. Residues Arg-183 and Arg-239 each contribute to the L-aspartate site. Carbamoyl phosphate contacts are provided by Gly-280 and Pro-281.

Belongs to the aspartate/ornithine carbamoyltransferase superfamily. ATCase family. In terms of assembly, heterododecamer (2C3:3R2) of six catalytic PyrB chains organized as two trimers (C3), and six regulatory PyrI chains organized as three dimers (R2).

The enzyme catalyses carbamoyl phosphate + L-aspartate = N-carbamoyl-L-aspartate + phosphate + H(+). Its pathway is pyrimidine metabolism; UMP biosynthesis via de novo pathway; (S)-dihydroorotate from bicarbonate: step 2/3. In terms of biological role, catalyzes the condensation of carbamoyl phosphate and aspartate to form carbamoyl aspartate and inorganic phosphate, the committed step in the de novo pyrimidine nucleotide biosynthesis pathway. This is Aspartate carbamoyltransferase catalytic subunit from Pseudomonas aeruginosa (strain LESB58).